Reading from the N-terminus, the 214-residue chain is Probable DNA (cytosine-5)-methyltransferase (214 aa).

Residue C62 is part of the active site.

This sequence belongs to the class I-like SAM-binding methyltransferase superfamily. C5-methyltransferase family. As to quaternary structure, probably requires another subunit for function.

The enzyme catalyses a 2'-deoxycytidine in DNA + S-adenosyl-L-methionine = a 5-methyl-2'-deoxycytidine in DNA + S-adenosyl-L-homocysteine + H(+). This is probably the methylase that recognizes and modifies 5'-CpG-3'. The polypeptide is Probable DNA (cytosine-5)-methyltransferase (Dryophytes versicolor (chameleon treefrog)).